The following is a 107-amino-acid chain: Phosphoribosyl-ATP pyrophosphatase (107 aa).

Belongs to the PRA-PH family.

It is found in the cytoplasm. It carries out the reaction 1-(5-phospho-beta-D-ribosyl)-ATP + H2O = 1-(5-phospho-beta-D-ribosyl)-5'-AMP + diphosphate + H(+). The protein operates within amino-acid biosynthesis; L-histidine biosynthesis; L-histidine from 5-phospho-alpha-D-ribose 1-diphosphate: step 2/9. This is Phosphoribosyl-ATP pyrophosphatase from Methylobacterium radiotolerans (strain ATCC 27329 / DSM 1819 / JCM 2831 / NBRC 15690 / NCIMB 10815 / 0-1).